Here is a 549-residue protein sequence, read N- to C-terminus: uncharacterized protein (549 aa).

The first 19 residues, 1–19 (MNWRRIVWLLALVTLPTLA), serve as a signal peptide directing secretion.

This is an uncharacterized protein from Escherichia coli (strain K12).